Here is a 377-residue protein sequence, read N- to C-terminus: 3-dehydroquinate synthase (377 aa).

NAD(+) contacts are provided by residues 115-119 (GVIGD), 139-140 (TS), Lys-152, and Lys-162. Positions 195, 257, and 276 each coordinate Zn(2+).

It belongs to the sugar phosphate cyclases superfamily. Dehydroquinate synthase family. It depends on Co(2+) as a cofactor. Zn(2+) serves as cofactor. NAD(+) is required as a cofactor.

The protein localises to the cytoplasm. It catalyses the reaction 7-phospho-2-dehydro-3-deoxy-D-arabino-heptonate = 3-dehydroquinate + phosphate. It participates in metabolic intermediate biosynthesis; chorismate biosynthesis; chorismate from D-erythrose 4-phosphate and phosphoenolpyruvate: step 2/7. In terms of biological role, catalyzes the conversion of 3-deoxy-D-arabino-heptulosonate 7-phosphate (DAHP) to dehydroquinate (DHQ). This Rhizobium etli (strain ATCC 51251 / DSM 11541 / JCM 21823 / NBRC 15573 / CFN 42) protein is 3-dehydroquinate synthase.